Consider the following 221-residue polypeptide: Ribosomal RNA large subunit methyltransferase E (221 aa).

5 residues coordinate S-adenosyl-L-methionine: G60, W62, D89, D105, and D134. K174 (proton acceptor) is an active-site residue.

This sequence belongs to the class I-like SAM-binding methyltransferase superfamily. RNA methyltransferase RlmE family.

It localises to the cytoplasm. The enzyme catalyses uridine(2552) in 23S rRNA + S-adenosyl-L-methionine = 2'-O-methyluridine(2552) in 23S rRNA + S-adenosyl-L-homocysteine + H(+). Functionally, specifically methylates the uridine in position 2552 of 23S rRNA at the 2'-O position of the ribose in the fully assembled 50S ribosomal subunit. In Cupriavidus taiwanensis (strain DSM 17343 / BCRC 17206 / CCUG 44338 / CIP 107171 / LMG 19424 / R1) (Ralstonia taiwanensis (strain LMG 19424)), this protein is Ribosomal RNA large subunit methyltransferase E.